A 753-amino-acid polypeptide reads, in one-letter code: Replication restart protein PriA (753 aa).

Residues 228 to 395 (SLITTKFQTC…LSKKYTLSVL (168 aa)) enclose the Helicase ATP-binding domain. 241–248 (GVTGSGKT) serves as a coordination point for ATP. The DEAH box signature appears at 337 to 340 (DEEH). Residues Cys-458, Cys-461, Cys-467, Cys-470, Cys-485, Cys-488, Cys-499, and Cys-502 each contribute to the Zn(2+) site. Residues 491–646 (RLSKPITSCP…DFPAFYKEEI (156 aa)) form the Helicase C-terminal domain.

It belongs to the helicase family. PriA subfamily. Component of the replication restart primosome. The cofactor is Zn(2+).

It carries out the reaction Couples ATP hydrolysis with the unwinding of duplex DNA by translocating in the 3'-5' direction.. It catalyses the reaction ATP + H2O = ADP + phosphate + H(+). In terms of biological role, initiates the restart of stalled replication forks, which reloads the replicative helicase on sites other than the origin of replication. Recognizes and binds to abandoned replication forks and remodels them to uncover a helicase loading site. Promotes assembly of the primosome at these replication forks. The chain is Replication restart protein PriA from Chlamydia muridarum (strain MoPn / Nigg).